The sequence spans 1029 residues: Serine/threonine-protein kinase KSP1 (1029 aa).

Residues 18 to 351 (YQKIEDISEG…TELQNLSEYT (334 aa)) enclose the Protein kinase domain. ATP is bound by residues 27 to 35 (GSYGYVSLA) and lysine 47. The segment covering 56–79 (GQYDGPQDDENDCDSSDCDDDEDT) has biased composition (acidic residues). The segment at 56–105 (GQYDGPQDDENDCDSSDCDDDEDTKVDTDRHENENGNASSNNGSSREKKH) is disordered. Basic and acidic residues predominate over residues 80-89 (KVDTDRHENE). The segment covering 90-99 (NGNASSNNGS) has biased composition (low complexity). Aspartate 207 acts as the Proton acceptor in catalysis. Residues 377-397 (VPPSSAPVSLPTPISSSNKQH) are disordered. Residues serine 416 and serine 419 each carry the phosphoserine modification. A phosphothreonine mark is found at threonine 501, threonine 504, and threonine 526. Residue serine 529 is modified to Phosphoserine. The tract at residues 532–570 (HRYMEGFSNNNNKQYRQNRNYNNNNNNSNNNHGSNYNNF) is disordered. Positions 538–570 (FSNNNNKQYRQNRNYNNNNNNSNNNHGSNYNNF) are enriched in low complexity. Serine 646 carries the phosphoserine modification. The disordered stretch occupies residues 732–824 (STNHNNNGNN…SDSKELEQER (93 aa)). A compositionally biased stretch (low complexity) spans 734–743 (NHNNNGNNNH). A compositionally biased stretch (polar residues) spans 744-754 (IDTNSTTNQYH). A compositionally biased stretch (basic and acidic residues) spans 813–824 (HSSDSKELEQER). Serine 845 and serine 884 each carry phosphoserine. Residues 949–978 (EYEGESDKMAHGKMEGGDNESSSTSPDERQ) are disordered. Residues 953–964 (ESDKMAHGKMEG) are compositionally biased toward basic and acidic residues. Position 1005 is a phosphothreonine (threonine 1005). Serine 1014 is modified (phosphoserine).

Belongs to the protein kinase superfamily. Ser/Thr protein kinase family. CK2 subfamily. Post-translationally, phosphorylated by PKA in a TORC1-dependent manner. Phosphorylation at PKA consensus sites RRxS/T decreases upon rapamycin treatment.

The protein localises to the nucleus. The enzyme catalyses L-seryl-[protein] + ATP = O-phospho-L-seryl-[protein] + ADP + H(+). It catalyses the reaction L-threonyl-[protein] + ATP = O-phospho-L-threonyl-[protein] + ADP + H(+). Functionally, may act on PRP20. The polypeptide is Serine/threonine-protein kinase KSP1 (KSP1) (Saccharomyces cerevisiae (strain ATCC 204508 / S288c) (Baker's yeast)).